We begin with the raw amino-acid sequence, 244 residues long: U11/U12 small nuclear ribonucleoprotein 35 kDa protein (244 aa).

The region spanning 51–129 is the RRM domain; sequence LTLFVARLNS…HEIFVDYELE (79 aa). The segment covering 146–162 has biased composition (basic and acidic residues); sequence GKKESGQLRFGGRDRPF. A disordered region spans residues 146 to 244; the sequence is GKKESGQLRF…KTRDKRDRSK (99 aa). Lys-172 participates in a covalent cross-link: Glycyl lysine isopeptide (Lys-Gly) (interchain with G-Cter in SUMO2). Basic and acidic residues-rich tracts occupy residues 173–185 and 192–244; these read NEPHREGKRERRE and RHWD…DRSK.

Component of the U11/U12 snRNPs that are part of the U12-type spliceosome.

It is found in the nucleus. In Rattus norvegicus (Rat), this protein is U11/U12 small nuclear ribonucleoprotein 35 kDa protein (Snrnp35).